Here is a 335-residue protein sequence, read N- to C-terminus: MGRIKTYDFDGEYVTWTTRWSYAGSIYYRNGKFSASSNCGILKVLNKEINPKFLAYALKKEAKKFVNTTSAIPILRTQKVVEIPIDFPPLQIQEKIATILDTFTELSAELSAELSAELSAELSAELRERKKQYAFYRDYLLNLKNWKEENKYYKLGEIAQKVLVGGEKPADFSKEKNEVYKYPILSNNSKAEEFLVYSKTFRVEEKSITVSARGTIGAVFYRDFAYLPAVSLICFVPKEEFDIRFLFHALRAIKFKKQGSATGQLTVAQFKEYGIHVPSLKKQKEIAAILDPLYSFFTDLNEGIPAEIELRKKQLDYYQNFLFNWVQNQKAASIL.

Belongs to the type-I restriction system S methylase family. In terms of assembly, the methyltransferase is composed of M and S polypeptides.

The specificity (S) subunit of a type I methyltransferase (MTase); this subunit dictates DNA sequence specificity. The single R subunit has multiple frameshifts and is probably not expressed. In Mycoplasma pneumoniae (strain ATCC 29342 / M129 / Subtype 1) (Mycoplasmoides pneumoniae), this protein is Putative type I specificity subunit S.MpnORF89P.